We begin with the raw amino-acid sequence, 308 residues long: GTPase Era (308 aa).

An Era-type G domain is found at 9 to 179; that stretch reads RAGFVALIGE…RAWLGASLPE (171 aa). A G1 region spans residues 17 to 24; the sequence is GEPNAGKS. 17–24 lines the GTP pocket; sequence GEPNAGKS. Positions 43–47 are G2; the sequence is QTTRA. Residues 64–67 are G3; it reads DTPG. GTP-binding positions include 64-68 and 129-132; these read DTPGL and NKID. The segment at 129–132 is G4; the sequence is NKID. The tract at residues 158 to 160 is G5; sequence ISA. Residues 210–287 enclose the KH type-2 domain; it reads LHQELPYQLT…HLFLQVKVRP (78 aa).

The protein belongs to the TRAFAC class TrmE-Era-EngA-EngB-Septin-like GTPase superfamily. Era GTPase family. As to quaternary structure, monomer.

Its subcellular location is the cytoplasm. The protein localises to the cell inner membrane. Its function is as follows. An essential GTPase that binds both GDP and GTP, with rapid nucleotide exchange. Plays a role in 16S rRNA processing and 30S ribosomal subunit biogenesis and possibly also in cell cycle regulation and energy metabolism. This chain is GTPase Era, found in Dinoroseobacter shibae (strain DSM 16493 / NCIMB 14021 / DFL 12).